Reading from the N-terminus, the 431-residue chain is Tol-Pal system protein TolB (431 aa).

An N-terminal signal peptide occupies residues 1 to 26 (MSLMTKLGFRALVASCLITAGSAANA). Residues 406 to 431 (DGSAPPQILSVQGGSVREPSWGPFMQ) form a disordered region.

The protein belongs to the TolB family. In terms of assembly, the Tol-Pal system is composed of five core proteins: the inner membrane proteins TolA, TolQ and TolR, the periplasmic protein TolB and the outer membrane protein Pal. They form a network linking the inner and outer membranes and the peptidoglycan layer.

The protein resides in the periplasm. In terms of biological role, part of the Tol-Pal system, which plays a role in outer membrane invagination during cell division and is important for maintaining outer membrane integrity. The protein is Tol-Pal system protein TolB of Burkholderia cenocepacia (strain HI2424).